Here is a 251-residue protein sequence, read N- to C-terminus: MLGARLRLWVCALCSVCSMSVLRAYPNASPLLGSSWGGLIHLYTATARNSYHLQIHKNGHVDGAPHQTIYSALMIRSEDAGFVVITGVMSRRYLCMDFRGNIFGSHYFDPENCRFQHQTLENGYDVYHSPQYHFLVSLGRAKRAFLPGMNPPPYSQFLSRRNEIPLIHFNTPIPRRHTRSAEDDSERDPLNVLKPRARMTPAPASCSQELPSAEDNSPMASDPLGVVRGGRVNTHAGGTGPEGCRPFAKFI.

A signal peptide spans M1 to A24. Cysteines 95 and 113 form a disulfide. O-linked (GalNAc) threonine glycans are attached at residues T171 and T178. A disordered region spans residues P172–S221. S180 carries the phosphoserine; by FAM20C modification. The span at S205–M219 shows a compositional bias: polar residues.

It belongs to the heparin-binding growth factors family. In terms of assembly, interacts with FGFR1, FGFR2, FGFR3 and FGFR4. Affinity between fibroblast growth factors (FGFs) and their receptors is increased by KL and heparan sulfate glycosaminoglycans that function as coreceptors. In terms of processing, following secretion this protein is inactivated by cleavage into a N-terminal fragment and a C-terminal fragment. The processing is effected by proprotein convertases. O-glycosylated at Thr-171 and Thr-178 by GALNT3 and glycosylation of Thr-178 requires previous glycosylation at Thr171. Glycosylation is necessary for secretion; it blocks processing by proprotein convertases when the O-glycan is alpha 2,6-sialylated. Competition between proprotein convertase cleavage and block of cleavage by O-glycosylation determines the level of secreted active FGF23. Post-translationally, phosphorylation at Ser-180 mediated by FAM20C slows down glycosylation at Thr-178 notably. In terms of tissue distribution, expressed in osteogenic cells particularly during phases of active bone remodeling. In adult trabecular bone, expressed in osteocytes and flattened bone-lining cells (inactive osteoblasts).

The protein localises to the secreted. Its function is as follows. Regulator of phosphate homeostasis. Inhibits renal tubular phosphate transport by reducing SLC34A1 levels. Up-regulates EGR1 expression in the presence of KL. Acts directly on the parathyroid to decrease PTH secretion. Regulator of vitamin-D metabolism. Negatively regulates osteoblast differentiation and matrix mineralization. This Homo sapiens (Human) protein is Fibroblast growth factor 23 (FGF23).